Here is a 480-residue protein sequence, read N- to C-terminus: Voltage-gated potassium channel regulatory subunit KCNG2 (480 aa).

Disordered stretches follow at residues 1 to 25 and 144 to 167; these read MARL…GRGG and AAEA…LGSG. The Cytoplasmic portion of the chain corresponds to 1-187; it reads MARLPGHPEV…DVVENPHSGL (187 aa). The helical transmembrane segment at 188-209 threads the bilayer; it reads AGKLFAYVSVAFVAVTAVGLCL. The Extracellular portion of the chain corresponds to 210-230; that stretch reads STMPDVRAEEERGECSTKCRN. The chain crosses the membrane as a helical span at residues 231-252; sequence LFVLETVCVAWFSFEFLLRSLQ. At 253–263 the chain is on the cytoplasmic side; it reads AESKCAFLRTP. A helical membrane pass occupies residues 264-284; the sequence is LAIIDILAILPFYVSLLAGLA. Over 285–296 the chain is Extracellular; that stretch reads AGPTGSKMLERA. A helical; Voltage-sensor membrane pass occupies residues 297–317; it reads GLVLRLLRALRVLYVMRLARH. Residues 318 to 332 lie on the Cytoplasmic side of the membrane; the sequence is SLGLRSLGLTVRRCA. The chain crosses the membrane as a helical span at residues 333–354; that stretch reads REFGLLLLFLCVAMALFAPLVH. The Extracellular portion of the chain corresponds to 355-369; sequence LAERELGAHRDFSSV. The helical intramembrane region spans 370–381; sequence PASYWWAVISMT. The Selectivity filter signature appears at 382–387; that stretch reads TVGYGD. An intramembrane segment occupies 382–389; that stretch reads TVGYGDMV. Residues 390 to 396 lie on the Extracellular side of the membrane; it reads PRSLPGQ. A helical transmembrane segment spans residues 397–425; that stretch reads VVALSSILSGILLMAFPVTSIFHTFSRSY. The Cytoplasmic portion of the chain corresponds to 426–480; the sequence is SELKEQQQRAASPEPVLREDSTRDDSTRSASATEDSSQDPETAGAAGSLPGPVGP. The tract at residues 429 to 480 is disordered; that stretch reads KEQQQRAASPEPVLREDSTRDDSTRSASATEDSSQDPETAGAAGSLPGPVGP. Basic and acidic residues predominate over residues 441 to 452; it reads VLREDSTRDDST.

It belongs to the potassium channel family. G (TC 1.A.1.2) subfamily. Kv6.2/KCNG2 sub-subfamily. Heterodimer with KCNB1. As to expression, highly expressed in heart, in particular in right and left atrium, and detected at lower levels in the right and left ventricle.

The protein localises to the cell membrane. Its function is as follows. Regulatory alpha-subunit of the voltage-gated potassium (Kv) channel which, when coassembled with KCNB1, can modulate the kinetics and conductance-voltage relationship. Modulates channel activity by shifting the threshold and the half-maximal activation to more negative values. Potassium channel subunit that does not form functional channels by itself. In Rattus norvegicus (Rat), this protein is Voltage-gated potassium channel regulatory subunit KCNG2.